An 822-amino-acid polypeptide reads, in one-letter code: Fibroblast growth factor receptor 1 (822 aa).

The N-terminal stretch at 1–21 is a signal peptide; the sequence is MWGWKCLLFWAVLVTATLCTA. Residues 22–376 are Extracellular-facing; sequence RPAPTLPEQA…AVMTSPLYLE (355 aa). The region spanning 25–119 is the Ig-like C2-type 1 domain; sequence PTLPEQAQPW…DTTYFSVNVS (95 aa). Cysteines 55 and 101 form a disulfide. 2 N-linked (GlcNAc...) asparagine glycosylation sites follow: asparagine 77 and asparagine 117. The interval 120–162 is disordered; it reads DALPSSEDDDDDDDSSSEEKETDNTKPNRRPVAPYWTSPEKME. Residues 125 to 135 are compositionally biased toward acidic residues; it reads SEDDDDDDDSS. Residues 136–145 show a composition bias toward basic and acidic residues; the sequence is SEEKETDNTK. Ig-like C2-type domains are found at residues 158–246 and 255–357; these read PEKM…YQLD and PILQ…AWLT. Residues 160 to 177 are heparin-binding; the sequence is KMEKKLHAVPAAKTVKFK. Cysteine 178 and cysteine 230 are joined by a disulfide. Asparagine 227, asparagine 240, asparagine 264, asparagine 296, asparagine 317, and asparagine 330 each carry an N-linked (GlcNAc...) asparagine glycan. Cysteine 277 and cysteine 341 are disulfide-bonded. A helical membrane pass occupies residues 377 to 397; sequence IIIYCTGAFLISCMLGSVIIY. Topologically, residues 398–822 are cytoplasmic; that stretch reads KMKSGTKKSD…QLANSGLKRR (425 aa). Position 463 is a phosphotyrosine; by autocatalysis (tyrosine 463). In terms of domain architecture, Protein kinase spans 478–767; the sequence is LVLGKPLGEG…VALTSNQEYL (290 aa). Residues 484–490, lysine 514, 562–564, and asparagine 568 contribute to the ATP site; these read LGEGCFG and EYA. Residues tyrosine 583 and tyrosine 585 each carry the phosphotyrosine; by autocatalysis modification. Aspartate 623 serves as the catalytic Proton acceptor. ATP is bound by residues arginine 627 and aspartate 641. 4 positions are modified to phosphotyrosine; by autocatalysis: tyrosine 653, tyrosine 654, tyrosine 730, and tyrosine 766. The span at 782–792 shows a compositional bias: polar residues; it reads DTRSSTCSSGE. Residues 782–822 form a disordered region; sequence DTRSSTCSSGEDSVFSHEPLPEEPCLPRHPTQLANSGLKRR.

This sequence belongs to the protein kinase superfamily. Tyr protein kinase family. Fibroblast growth factor receptor subfamily. Monomer. Homodimer after ligand binding. Interacts predominantly with FGF1 and FGF2, but can also interact with FGF3, FGF4, FGF5, FGF6, FGF8, FGF10, FGF19, FGF21, FGF22 and FGF23 (in vitro). Ligand specificity is determined by tissue-specific expression of isoforms, and differences in the third Ig-like domain are crucial for ligand specificity. Affinity for fibroblast growth factors (FGFs) is increased by heparan sulfate glycosaminoglycans that function as coreceptors. Likewise, KLB increases the affinity for FGF19, FGF21 and FGF23. Interacts (phosphorylated on Tyr-766) with PLCG1 (via SH2 domains). Interacts with FRS2. Interacts with RPS6KA1. Interacts (via C-terminus) with NEDD4 (via WW3 domain). Interacts with KL. Interacts with SHB (via SH2 domain). Interacts with GRB10. Interacts with ANOS1; this interaction does not interfere with FGF2-binding to FGFR1, but prevents binding of heparin-bound FGF2. Interacts with SOX2 and SOX3. Interacts with FLRT1, FLRT2 and FLRT3. Found in a ternary complex with FGF1 and ITGAV:ITGB3. Autophosphorylated. Binding of FGF family members together with heparan sulfate proteoglycan or heparin promotes receptor dimerization and autophosphorylation on tyrosine residues. Autophosphorylation occurs in trans between the two FGFR molecules present in the dimer and proceeds in a highly ordered manner. Initial autophosphorylation at Tyr-653 increases the kinase activity by a factor of 50 to 100. After this, Tyr-583 becomes phosphorylated, followed by phosphorylation of Tyr-463, Tyr-766, Tyr-583 and Tyr-585. In a third stage, Tyr-654 is autophosphorylated, resulting in a further tenfold increase of kinase activity. Phosphotyrosine residues provide docking sites for interacting proteins and so are crucial for FGFR1 function and its regulation. Post-translationally, ubiquitinated. FGFR1 is rapidly ubiquitinated by NEDD4 after autophosphorylation, leading to internalization and lysosomal degradation. CBL is recruited to activated FGFR1 via FRS2 and GRB2, and mediates ubiquitination and subsequent degradation of FGFR1. In terms of processing, N-glycosylated in the endoplasmic reticulum. The N-glycan chains undergo further maturation to an Endo H-resistant form in the Golgi apparatus. As to expression, widely expressed.

The protein resides in the cell membrane. Its subcellular location is the nucleus. The protein localises to the cytoplasm. It is found in the cytosol. It localises to the cytoplasmic vesicle. It carries out the reaction L-tyrosyl-[protein] + ATP = O-phospho-L-tyrosyl-[protein] + ADP + H(+). Present in an inactive conformation in the absence of bound ligand. Ligand binding leads to dimerization and activation by sequential autophosphorylation on tyrosine residues. In terms of biological role, tyrosine-protein kinase that acts as a cell-surface receptor for fibroblast growth factors and plays an essential role in the regulation of embryonic development, cell proliferation, differentiation and migration. Required for normal mesoderm patterning and correct axial organization during embryonic development, normal skeletogenesis and normal development of the gonadotropin-releasing hormone (GnRH) neuronal system. Phosphorylates PLCG1, FRS2, GAB1 and SHB. Ligand binding leads to the activation of several signaling cascades. Activation of PLCG1 leads to the production of the cellular signaling molecules diacylglycerol and inositol 1,4,5-trisphosphate. Phosphorylation of FRS2 triggers recruitment of GRB2, GAB1, PIK3R1 and SOS1, and mediates activation of RAS, MAPK1/ERK2, MAPK3/ERK1 and the MAP kinase signaling pathway, as well as of the AKT1 signaling pathway. Promotes phosphorylation of SHC1, STAT1 and PTPN11/SHP2. In the nucleus, enhances RPS6KA1 and CREB1 activity and contributes to the regulation of transcription. FGFR1 signaling is down-regulated by IL17RD/SEF, and by FGFR1 ubiquitination, internalization and degradation. This chain is Fibroblast growth factor receptor 1 (Fgfr1), found in Mus musculus (Mouse).